We begin with the raw amino-acid sequence, 82 residues long: Small ribosomal subunit protein uS17c (82 aa).

The protein belongs to the universal ribosomal protein uS17 family. Part of the 30S ribosomal subunit.

The protein resides in the plastid. The protein localises to the chloroplast. Functionally, one of the primary rRNA binding proteins, it binds specifically to the 5'-end of 16S ribosomal RNA. This is Small ribosomal subunit protein uS17c (rps17) from Cyanidioschyzon merolae (strain NIES-3377 / 10D) (Unicellular red alga).